A 78-amino-acid polypeptide reads, in one-letter code: Large ribosomal subunit protein bL28 (78 aa).

The protein belongs to the bacterial ribosomal protein bL28 family.

The chain is Large ribosomal subunit protein bL28 from Marinobacter nauticus (strain ATCC 700491 / DSM 11845 / VT8) (Marinobacter aquaeolei).